A 92-amino-acid polypeptide reads, in one-letter code: MTRSLKKNPFIAKHLLRKIAMLNTTWEKEIIVTWSRTSTIIPTMIGHTIAVHNGKEHFPIYITDRMVGHKLGEFSSTLNFRGHAKNDNRSRR.

This sequence belongs to the universal ribosomal protein uS19 family.

The protein localises to the plastid. The protein resides in the chloroplast. Functionally, protein S19 forms a complex with S13 that binds strongly to the 16S ribosomal RNA. The chain is Small ribosomal subunit protein uS19c from Vitis vinifera (Grape).